The following is a 138-amino-acid chain: Small ribosomal subunit protein uS12m (138 aa).

The transit peptide at 1–29 directs the protein to the mitochondrion; it reads MSWSGLLHGLNTSLTCGPALVPRLWATCS. A disordered region spans residues 36–56; that stretch reads MHRLGPPKRPPRKLGPTEGRP.

Belongs to the universal ribosomal protein uS12 family. As to quaternary structure, component of the mitochondrial small ribosomal subunit (mt-SSU). Mature mammalian 55S mitochondrial ribosomes consist of a small (28S) and a large (39S) subunit. The 28S small subunit contains a 12S ribosomal RNA (12S mt-rRNA) and 30 different proteins. The 39S large subunit contains a 16S rRNA (16S mt-rRNA), a copy of mitochondrial valine transfer RNA (mt-tRNA(Val)), which plays an integral structural role, and 52 different proteins.

The protein resides in the mitochondrion. The sequence is that of Small ribosomal subunit protein uS12m (MRPS12) from Homo sapiens (Human).